The primary structure comprises 342 residues: Phomopsin biosynthesis cluster protein B' (342 aa).

Positions 1-22 (MESIAKAKSLPNKGRTYDSQRP) are disordered. The helical transmembrane segment at 87-107 (VLIIGCAVISLFAIIGALGFA) threads the bilayer. The interval 118–186 (CASPAHQNPH…QCGESPDEAQ (69 aa)) is disordered. A compositionally biased stretch (low complexity) spans 144-155 (HSGSHSSSSSTN). Asparagine 248 carries N-linked (GlcNAc...) asparagine glycosylation.

It localises to the membrane. Its function is as follows. Part of the gene cluster that mediates the biosynthesis of the phomopsins, a group of hexapeptide mycotoxins which infects lupins and causes lupinosis disease in livestock. The role of phomB' within the phomopsins biosynthesis pathway has still to be determined. The pathway starts with the processing of the precursor phomA by several endopeptidases including kexin proteases as well as the cluster-specific S41 family peptidase phomP1 and the oligopeptidase phomG to produce 10 identical copies of the hexapeptide Tyr-Val-Ile-Pro-Ile-Asp. After being excised from the precursor peptide, the core peptides are cyclized and modified post-translationally by enzymes encoded within the gene cluster. The timing and order of proteolysis of the phomA precursor and PTMs are still unknown. Two tyrosinase-like enzymes, phomQ1 and phomQ2, catalyze the chlorination and hydroxylation of Tyr, respectively. PhomYb, is proposed to be involved in the construction of the macrocyclic structure. The other 4 ustYa family proteins may be involved in PTMs that generate the unique structure of phomopsin A. PhomYa is required for the hydroxylation of C-beta of Tyr. PhomYc, phomYd, and phomYe are responsible for the biosynthesis of 2,3-dehydroisoleucine (dIle), 2,3-dehydroaspartic acid (dAsp), and 3,4-dehydroproline (dPro), respectively. While dIle formation by phomYc is indispensable for the installation of dAsp by phomYd, the order of the other PTMs have not been elucidated yet. Most of the biosynthetic enzymes likely have broad substrate specificity, and thus, there might be a metabolic grid from a precursor to phomopsin A. The enzyme(s) responsible for the biosynthesis of 3,4-dehydrovaline (dVal) have also not been identified yet. Finally, phomM acts as an S-adenosylmethionine-dependent alpha-N-methyltransferase that catalyzes two successive N-methylation reactions, converting N-desmethyl-phomopsin A to phomopsin A and phomopsin A further to an N,N-dimethylated congener called phomopsin E. This is Phomopsin biosynthesis cluster protein B' from Diaporthe leptostromiformis (Lupinosis disease fungus).